The chain runs to 113 residues: Ribosome-associated factor Y (113 aa).

At Lys-66 the chain carries N6-acetyllysine. The interval Lys-91–Glu-113 is disordered.

Belongs to the HPF/YfiA ribosome-associated protein family. YfiA subfamily. In terms of assembly, associates mainly with 70S ribosomes.

During stationary phase, prevents 70S dimer formation, probably in order to regulate translation efficiency during transition between the exponential and the stationary phases. In addition, during environmental stress such as cold shock or excessive cell density at stationary phase, stabilizes the 70S ribosome against dissociation, inhibits translation initiation and increase translation accuracy. When normal growth conditions are restored, is quickly released from the ribosome. The chain is Ribosome-associated factor Y from Escherichia coli O157:H7.